The chain runs to 130 residues: Nascent polypeptide-associated complex protein (130 aa).

The region spanning 6 to 74 (GMNPRKMQQM…PVERDAADAI (69 aa)) is the NAC-A/B domain. Residues 65 to 91 (PVERDAADAIEAAPADDSDDTDDDDAI) are disordered. A compositionally biased stretch (acidic residues) spans 78–90 (PADDSDDTDDDDA).

This sequence belongs to the NAC-alpha family. As to quaternary structure, homodimer. Interacts with the ribosome. Binds ribosomal RNA.

Functionally, contacts the emerging nascent chain on the ribosome. This chain is Nascent polypeptide-associated complex protein, found in Halobacterium salinarum (strain ATCC 700922 / JCM 11081 / NRC-1) (Halobacterium halobium).